Here is a 200-residue protein sequence, read N- to C-terminus: Large ribosomal subunit protein uL4 (200 aa).

The segment at 38 to 80 is disordered; the sequence is GRQGSKQQKTRSDVSGGGKRPWRQKGTGRARAGTTRGPIWRGG.

It belongs to the universal ribosomal protein uL4 family. In terms of assembly, part of the 50S ribosomal subunit.

Its function is as follows. One of the primary rRNA binding proteins, this protein initially binds near the 5'-end of the 23S rRNA. It is important during the early stages of 50S assembly. It makes multiple contacts with different domains of the 23S rRNA in the assembled 50S subunit and ribosome. Functionally, forms part of the polypeptide exit tunnel. This is Large ribosomal subunit protein uL4 from Stutzerimonas stutzeri (strain A1501) (Pseudomonas stutzeri).